Consider the following 240-residue polypeptide: Fatty acid metabolism regulator protein (240 aa).

Residues 6–74 (KGPASFAEKY…HGKPTRVNNF (69 aa)) enclose the HTH gntR-type domain. Residues 34-53 (ERELSELIGVTRTTLREVLQ) constitute a DNA-binding region (H-T-H motif).

Homodimer.

Its subcellular location is the cytoplasm. Functionally, multifunctional regulator of fatty acid metabolism. The polypeptide is Fatty acid metabolism regulator protein (Shewanella amazonensis (strain ATCC BAA-1098 / SB2B)).